Here is an 81-residue protein sequence, read N- to C-terminus: U1-sicaritoxin-Li1c (81 aa).

The propeptide occupies 1-16; the sequence is ARGDAEKWESLISEER. Cystine bridges form between cysteine 18–cysteine 35, cysteine 26–cysteine 40, cysteine 34–cysteine 53, and cysteine 42–cysteine 51. Arginine 62 bears the Arginine amide mark. The propeptide occupies 66–81; sequence ALMLDPETHRLLFSED.

Belongs to the neurotoxin 28 (Litx) family. As to expression, expressed by the venom gland.

The protein localises to the secreted. In terms of biological role, toxin active against insects (S.frugiperda larvae). May act on sodium (Nav) or calcium (Cav) channels. The protein is U1-sicaritoxin-Li1c of Loxosceles intermedia (Brown spider).